Reading from the N-terminus, the 239-residue chain is Adapter protein MecA (239 aa).

Residues 118–128 are compositionally biased toward basic and acidic residues; sequence EQRTKEKEAQG. Positions 118 to 137 are disordered; sequence EQRTKEKEAQGSKRQKSSAR.

Belongs to the MecA family. In terms of assembly, homodimer.

Its function is as follows. Enables the recognition and targeting of unfolded and aggregated proteins to the ClpC protease or to other proteins involved in proteolysis. The chain is Adapter protein MecA from Staphylococcus aureus (strain USA300).